A 93-amino-acid polypeptide reads, in one-letter code: Large ribosomal subunit protein eL42 (93 aa).

2 residues coordinate Zn(2+): cysteine 11 and cysteine 14. The C4-type zinc-finger motif lies at 11-75; sequence CPNCDEHHQL…TDLKYRCSEC (65 aa). A disordered region spans residues 24 to 62; that stretch reads KVRSGRSSGMKWDARRTKRANASIGNHGRFSKVPVGNKP. Zn(2+) is bound by residues cysteine 72 and cysteine 75.

It belongs to the eukaryotic ribosomal protein eL42 family. In terms of assembly, part of the 50S ribosomal subunit. It depends on Zn(2+) as a cofactor.

Functionally, binds to the 23S rRNA. The protein is Large ribosomal subunit protein eL42 of Halobacterium salinarum (strain ATCC 700922 / JCM 11081 / NRC-1) (Halobacterium halobium).